The primary structure comprises 145 residues: Ribosome-binding factor A (145 aa).

A compositionally biased stretch (basic and acidic residues) spans K122–R132. The interval K122–D145 is disordered.

The protein belongs to the RbfA family. Monomer. Binds 30S ribosomal subunits, but not 50S ribosomal subunits or 70S ribosomes.

It is found in the cytoplasm. In terms of biological role, one of several proteins that assist in the late maturation steps of the functional core of the 30S ribosomal subunit. Associates with free 30S ribosomal subunits (but not with 30S subunits that are part of 70S ribosomes or polysomes). Required for efficient processing of 16S rRNA. May interact with the 5'-terminal helix region of 16S rRNA. The polypeptide is Ribosome-binding factor A (Methylorubrum extorquens (strain PA1) (Methylobacterium extorquens)).